Here is a 72-residue protein sequence, read N- to C-terminus: Cytochrome b-c1 complex subunit 8-2, mitochondrial (72 aa).

Over 1–41 (MGKQPVKLKAVVYALSPFQQKIMTGLWKDLPEKIHHKVSEN) the chain is Mitochondrial matrix. A helical membrane pass occupies residues 42-58 (WISTILLVAPVVGTYSY). The Mitochondrial intermembrane segment spans residues 59 to 72 (AQYFKEQEKLEHRF).

Belongs to the UQCRQ/QCR8 family. Component of the ubiquinol-cytochrome c oxidoreductase (cytochrome b-c1 complex, complex III, CIII), a multisubunit enzyme composed of 10 subunits. The complex is composed of 3 respiratory subunits cytochrome b (MT-CYB), cytochrome c1 (CYC1-1 or CYC1-2) and Rieske protein (UCR1-1 or UCR1-2), 2 core protein subunits MPPalpha1 (or MPPalpha2) and MPPB, and 5 low-molecular weight protein subunits QCR7-1 (or QCR7-2), UCRQ-1 (or UCRQ-2), QCR9, UCRY and probably QCR6-1 (or QCR6-2). The complex exists as an obligatory dimer and forms supercomplexes (SCs) in the inner mitochondrial membrane with NADH-ubiquinone oxidoreductase (complex I, CI), resulting in different assemblies (supercomplexes SCI(1)III(2) and SCI(2)III(4)).

The protein localises to the mitochondrion inner membrane. Component of the ubiquinol-cytochrome c oxidoreductase, a multisubunit transmembrane complex that is part of the mitochondrial electron transport chain which drives oxidative phosphorylation. The respiratory chain contains 3 multisubunit complexes succinate dehydrogenase (complex II, CII), ubiquinol-cytochrome c oxidoreductase (cytochrome b-c1 complex, complex III, CIII) and cytochrome c oxidase (complex IV, CIV), that cooperate to transfer electrons derived from NADH and succinate to molecular oxygen, creating an electrochemical gradient over the inner membrane that drives transmembrane transport and the ATP synthase. The cytochrome b-c1 complex catalyzes electron transfer from ubiquinol to cytochrome c, linking this redox reaction to translocation of protons across the mitochondrial inner membrane, with protons being carried across the membrane as hydrogens on the quinol. In the process called Q cycle, 2 protons are consumed from the matrix, 4 protons are released into the intermembrane space and 2 electrons are passed to cytochrome c. The chain is Cytochrome b-c1 complex subunit 8-2, mitochondrial (UCRQ-2) from Arabidopsis thaliana (Mouse-ear cress).